The sequence spans 189 residues: Protein CURLY FLAG LEAF 1 (189 aa).

The EAR signature appears at 50–55 (TLELNS). Positions 57–91 (LSLPCHWEQCLDLKTGEIYYINWKNGMRVKEDPRK) constitute a WW domain. A disordered region spans residues 90–148 (RKVMNADPDSGDSYGTVCSEEDSSYYDSEESSSESSPSSRENHKEEEEEEEEEEEEEED). Composition is skewed to acidic residues over residues 108–121 (SEED…EESS) and 135–148 (EEEE…EEED).

In terms of assembly, interacts with BHLH122/CFLAP1 and BHLH80/CFLAP2. Binds to HDG1. Mostly observed in roots, flowers and siliques. Expressed in cells differentiated from epidermal cells such as trichomes, stigmatic papillar cells and guard cells, as well as in tissues undergoing abscission and dehiscence.

Negatively regulates the cuticle development by interacting with the HD-ZIP IV transcription factor HDG1. The chain is Protein CURLY FLAG LEAF 1 from Arabidopsis thaliana (Mouse-ear cress).